Here is a 391-residue protein sequence, read N- to C-terminus: 12-oxophytodienoate reductase 3 (391 aa).

The residue at position 1 (Met1) is an N-acetylmethionine. N-acetylthreonine; in 12-oxophytodienoate reductase 3, N-terminally processed is present on Thr2. Residues 31 to 33 (PMT), Gly64, and Gln106 each bind FMN. His186 contacts substrate. Catalysis depends on Tyr191, which acts as the Proton donor. FMN is bound at residue Arg238. Arg284 contacts substrate. Residues 320-322 (SGG) and 343-344 (GR) contribute to the FMN site. The Microbody targeting signal signature appears at 389 to 391 (SRL).

It belongs to the NADH:flavin oxidoreductase/NADH oxidase family. Requires FMN as cofactor. As to expression, expressed in green seedling, leaves, flowers (anthers, pistil, petal and stamen), and to a lower extent in roots and siliques. Specifically expressed in filament during anther dehiscence initiation.

The protein resides in the peroxisome. The catalysed reaction is (1S,2S)-OPC-8 + NADP(+) = (9S,13S,15Z)-12-oxophyto-10,15-dienoate + NADPH + H(+). It functions in the pathway lipid metabolism; oxylipin biosynthesis. Its function is as follows. Specifically cleaves olefinic bonds in cyclic enones. Involved in the biosynthesis of jasmonic acid (JA) and perhaps in biosynthesis or metabolism of other oxylipin signaling moleclules. Required for the spatial and temporal regulation of JA levels during dehiscence of anthers, promoting the stomium degeneration program. In vitro, reduces 9S,13S-12-oxophytodienoic acid (9S,13S-OPDA) and 9R,13R-OPDA to 9S,13S-OPC-8:0 and 9R,13R-OPC-8:0, respectively. Can detoxify the explosive 2,4,6-trinitrotoluene (TNT) in vitro by catalyzing its nitroreduction to form hydroxylamino-dinitrotoluene (HADNT). The protein is 12-oxophytodienoate reductase 3 of Arabidopsis thaliana (Mouse-ear cress).